The chain runs to 111 residues: Ribosome-binding factor A (111 aa).

This sequence belongs to the RbfA family. As to quaternary structure, monomer. Binds 30S ribosomal subunits, but not 50S ribosomal subunits or 70S ribosomes.

It is found in the cytoplasm. Its function is as follows. One of several proteins that assist in the late maturation steps of the functional core of the 30S ribosomal subunit. Associates with free 30S ribosomal subunits (but not with 30S subunits that are part of 70S ribosomes or polysomes). Required for efficient processing of 16S rRNA. May interact with the 5'-terminal helix region of 16S rRNA. In Helicobacter pylori (strain P12), this protein is Ribosome-binding factor A.